Consider the following 173-residue polypeptide: Co-chaperone protein HscB homolog (173 aa).

Positions 2-74 (NYFELFSLSP…ISRAEHMLSL (73 aa)) constitute a J domain.

Belongs to the HscB family. In terms of assembly, interacts with HscA and stimulates its ATPase activity.

Co-chaperone involved in the maturation of iron-sulfur cluster-containing proteins. Seems to help targeting proteins to be folded toward HscA. This Shewanella loihica (strain ATCC BAA-1088 / PV-4) protein is Co-chaperone protein HscB homolog.